The following is an 804-amino-acid chain: Ion-translocating oxidoreductase complex subunit C (804 aa).

2 4Fe-4S ferredoxin-type domains span residues 366 to 397 (SEMGQNEAEQGCIRCSACADACPAALLPQQLY) and 407 to 436 (KARAHNIADCIECGACAYVCPSNIPLVQYY). Residues Cys377, Cys380, Cys383, Cys387, Cys416, Cys419, Cys422, and Cys426 each coordinate [4Fe-4S] cluster. 2 disordered regions span residues 466–532 (RLER…EVRV) and 567–804 (KAAQ…MQED). Composition is skewed to low complexity over residues 484–495 (SVASSDAGAIAA), 567–582 (KAAQAAEASPTEAPQQ), 592–619 (AAVAAAVARTKAKKAAQAAEASPTEAPQ), 629–660 (KAAVAAAVARAKAKKAAQAAEASATEAPQQSA), 668–693 (AAVAAAVARAKAKKAAQAAEASATEA), 706–731 (AAVAAAVARAKAKKAAQAAEASATEA), and 744–769 (AAVAAAVARAKAKKAAQAAEASATEA).

This sequence belongs to the 4Fe4S bacterial-type ferredoxin family. RnfC subfamily. The complex is composed of six subunits: RnfA, RnfB, RnfC, RnfD, RnfE and RnfG. [4Fe-4S] cluster is required as a cofactor.

The protein localises to the cell inner membrane. In terms of biological role, part of a membrane-bound complex that couples electron transfer with translocation of ions across the membrane. The chain is Ion-translocating oxidoreductase complex subunit C from Erwinia tasmaniensis (strain DSM 17950 / CFBP 7177 / CIP 109463 / NCPPB 4357 / Et1/99).